Here is a 253-residue protein sequence, read N- to C-terminus: Malonyl-[acyl-carrier protein] O-methyltransferase (253 aa).

Belongs to the methyltransferase superfamily.

It carries out the reaction malonyl-[ACP] + S-adenosyl-L-methionine = malonyl-[ACP] methyl ester + S-adenosyl-L-homocysteine. It functions in the pathway cofactor biosynthesis; biotin biosynthesis. Converts the free carboxyl group of a malonyl-thioester to its methyl ester by transfer of a methyl group from S-adenosyl-L-methionine (SAM). It allows to synthesize pimeloyl-ACP via the fatty acid synthetic pathway. The protein is Malonyl-[acyl-carrier protein] O-methyltransferase of Pectobacterium atrosepticum (strain SCRI 1043 / ATCC BAA-672) (Erwinia carotovora subsp. atroseptica).